The following is a 350-amino-acid chain: MCRNNNNKLNLRDLNQSEIQHFIKDLGEKPFRADQICRWVFAQGVSSFDEMTNLSKGLRAKLNELTTLSQATILTSQVSAKGDTIKFLFGLPDGHAVESVLMKHTYGNSVCVSTQVGCRMGCLFCASTINGLVRNLSPGEIYDQVLGIQRETGERVSHIVIMGAGEPLDNFDNVLKFLENIHAEYGLNIGYRHITLSTCGLVPRMQELALRKLPITLAVSLHAPNDDLRDKLVPINRRYKIHQLIEACSNYIEITGRRITFEYALLSGINDSDEHVRQLAALLKNLLCHINLIPVNPVEEKEFIRTPPEKVERFRQYLEKVGLNVTVRRELGGDIDAACGQLRRRYESKN.

Catalysis depends on Glu-98, which acts as the Proton acceptor. The region spanning 104–334 (HTYGNSVCVS…VTVRRELGGD (231 aa)) is the Radical SAM core domain. Cys-111 and Cys-339 form a disulfide bridge. 3 residues coordinate [4Fe-4S] cluster: Cys-118, Cys-122, and Cys-125. Residues 165-166 (GE), Ser-197, 220-222 (SLH), and Asn-296 each bind S-adenosyl-L-methionine. Residue Cys-339 is the S-methylcysteine intermediate of the active site.

This sequence belongs to the radical SAM superfamily. RlmN family. Requires [4Fe-4S] cluster as cofactor.

The protein resides in the cytoplasm. It carries out the reaction adenosine(2503) in 23S rRNA + 2 reduced [2Fe-2S]-[ferredoxin] + 2 S-adenosyl-L-methionine = 2-methyladenosine(2503) in 23S rRNA + 5'-deoxyadenosine + L-methionine + 2 oxidized [2Fe-2S]-[ferredoxin] + S-adenosyl-L-homocysteine. The enzyme catalyses adenosine(37) in tRNA + 2 reduced [2Fe-2S]-[ferredoxin] + 2 S-adenosyl-L-methionine = 2-methyladenosine(37) in tRNA + 5'-deoxyadenosine + L-methionine + 2 oxidized [2Fe-2S]-[ferredoxin] + S-adenosyl-L-homocysteine. Specifically methylates position 2 of adenine 2503 in 23S rRNA and position 2 of adenine 37 in tRNAs. This Desulforamulus reducens (strain ATCC BAA-1160 / DSM 100696 / MI-1) (Desulfotomaculum reducens) protein is Probable dual-specificity RNA methyltransferase RlmN.